Consider the following 159-residue polypeptide: Major latex protein 146 (159 aa).

This sequence belongs to the MLP family. Laticifer.

The protein localises to the vacuole. Its subcellular location is the cytoplasmic vesicle. Functionally, not known; MLPs constitute up to 50% of the soluble latex protein. In Papaver somniferum (Opium poppy), this protein is Major latex protein 146 (MLP146).